Here is a 326-residue protein sequence, read N- to C-terminus: Olfactory receptor 11H1 (326 aa).

The Extracellular segment spans residues 1–44 (MCPLTLQVTGLMNVSEPNSSFAFVNEFILQGFSCEWTIQIFLFS). Residues N13 and N18 are each glycosylated (N-linked (GlcNAc...) asparagine). The chain crosses the membrane as a helical span at residues 45-65 (LFTTTYALTITGNGAIAFVLW). The Cytoplasmic portion of the chain corresponds to 66–72 (CDRRLHT). The chain crosses the membrane as a helical span at residues 73–93 (PMYMFLGNFSFLEIWYVSSTV). Topologically, residues 94–112 (PKMLVNFLSEKKNISFAGC) are extracellular. Residue N106 is glycosylated (N-linked (GlcNAc...) asparagine). A disulfide bond links C112 and C194. A helical transmembrane segment spans residues 113-133 (FLQFYFFFSLGTSECLLLTVM). The Cytoplasmic portion of the chain corresponds to 134-158 (AFDQYLAICRPLLYPNIMTGHLYAK). A helical membrane pass occupies residues 159–179 (LVILCWVCGFLWFLIPIVLIS). Over 180-216 (QMPFCGPNIIDHVVCDPGPRFALDCVSAPRIQLFCYT) the chain is Extracellular. A helical transmembrane segment spans residues 217-237 (LSSLVIFGNFLFIIGSYTLVL). The Cytoplasmic portion of the chain corresponds to 238–259 (KAMLGMPSSTGRHKAFSTCGSH). Residues 260-280 (LAVVSLCYSSLMVMYVSPGLG) form a helical membrane-spanning segment. Residues 281–287 (HSTGMQK) are Extracellular-facing. A helical membrane pass occupies residues 288–308 (IETLFYAMVTPLFNPLIYSLQ). Residues 309–326 (NKEIKAALRKVLGSSNII) lie on the Cytoplasmic side of the membrane.

Belongs to the G-protein coupled receptor 1 family.

Its subcellular location is the cell membrane. Functionally, odorant receptor. This is Olfactory receptor 11H1 (OR11H1) from Homo sapiens (Human).